Consider the following 277-residue polypeptide: Large ribosomal subunit protein uL2m (277 aa).

Residues 225-263 are disordered; the sequence is AMNPVDHPHGGGEGKTSGGRPSVTPWSWPTKGQPTRSKR. Positions 248-259 are enriched in polar residues; sequence TPWSWPTKGQPT.

Belongs to the universal ribosomal protein uL2 family.

The protein resides in the mitochondrion. This chain is Large ribosomal subunit protein uL2m (RPL2), found in Reclinomonas americana.